The following is a 342-amino-acid chain: Pyridoxal 4-dehydrogenase (342 aa).

Asp56 is a catalytic residue. Residue Tyr61 is the Proton donor of the active site. Lys86 is a catalytic residue. 245 to 255 (GVFNSGILAAP) is a binding site for NADP(+).

It belongs to the aldo/keto reductase family. In terms of assembly, homodimer.

It carries out the reaction pyridoxal + NAD(+) = 4-pyridoxolactone + NADH + H(+). The protein operates within cofactor degradation; B6 vitamer degradation; 4-pyridoxate from pyridoxal: step 1/2. This Microbacterium luteolum (Aureobacterium luteolum) protein is Pyridoxal 4-dehydrogenase (pld1).